The sequence spans 408 residues: MNFKFARFKSIFNILFILIIAFPGGLIYLLTGSTLSFWLRESDFDKITIGLFGLVNFIHIFKFLWGPLLEKISFSTLSNRGYKYCLVITLINCIFCVYVLTSFNPNTNFIPFVLCLVVLAFFSSIYDMLIQSSQMLLITDKNWGISEAACTTGFRIGILISGSGALYLSTIISWQDVYRTMAILCIPSLLLIIFYPLKFKDKIIDNDFDRFLNAFYDFIKKPKCIVIISFMLLYRLQDSFLSIMPNMFYLDIGYTKQDLAVGYKAFGMCATIFGGVIGGFLCRKYEYSYLLKRVLIYHALSSLSFIYLYFLNQDITSLYIAVFCQEFTKGLTMSPFFSYQLKCCSSRYCITQIALITSITNVGTILIGSISGYAATYLGWSYFFIVAGLCFIPAYILILYLPKTINSV.

11 helical membrane passes run 11-31, 49-69, 84-104, 110-130, 154-174, 177-197, 224-244, 261-281, 294-311, 353-373, and 382-402; these read IFNILFILIIAFPGGLIYLLT, IGLFGLVNFIHIFKFLWGPLL, YCLVITLINCIFCVYVLTSFN, IPFVLCLVVLAFFSSIYDMLI, FRIGILISGSGALYLSTIISW, VYRTMAILCIPSLLLIIFYPL, CIVIISFMLLYRLQDSFLSIM, VGYKAFGMCATIFGGVIGGFL, VLIYHALSSLSFIYLYFL, IALITSITNVGTILIGSISGY, and YFFIVAGLCFIPAYILILYLP.

Belongs to the major facilitator superfamily.

It is found in the cell inner membrane. This chain is Putative transporter AmpG 2 (ampG2), found in Rickettsia prowazekii (strain Madrid E).